Reading from the N-terminus, the 144-residue chain is Small ribosomal subunit protein eS19A (144 aa).

This sequence belongs to the eukaryotic ribosomal protein eS19 family. In terms of assembly, component of the small ribosomal subunit (SSU). Mature yeast ribosomes consist of a small (40S) and a large (60S) subunit. The 40S small subunit contains 1 molecule of ribosomal RNA (18S rRNA) and 33 different proteins (encoded by 57 genes). The large 60S subunit contains 3 rRNA molecules (25S, 5.8S and 5S rRNA) and 46 different proteins (encoded by 81 genes).

It is found in the cytoplasm. In terms of biological role, component of the ribosome, a large ribonucleoprotein complex responsible for the synthesis of proteins in the cell. The small ribosomal subunit (SSU) binds messenger RNAs (mRNAs) and translates the encoded message by selecting cognate aminoacyl-transfer RNA (tRNA) molecules. The large subunit (LSU) contains the ribosomal catalytic site termed the peptidyl transferase center (PTC), which catalyzes the formation of peptide bonds, thereby polymerizing the amino acids delivered by tRNAs into a polypeptide chain. The nascent polypeptides leave the ribosome through a tunnel in the LSU and interact with protein factors that function in enzymatic processing, targeting, and the membrane insertion of nascent chains at the exit of the ribosomal tunnel. eS19 is required for proper maturation of the small (40S) ribosomal subunit. Binds to 40S pre-ribosomal particles, probably required after association of NOC4 but before association of ENP1, TSR1 and RIO2 with 20/21S pre-rRNA. The polypeptide is Small ribosomal subunit protein eS19A (Saccharomyces cerevisiae (strain ATCC 204508 / S288c) (Baker's yeast)).